The chain runs to 192 residues: ATP synthase protein MI25 (192 aa).

Residues 29–49 form a helical membrane-spanning segment; that stretch reads ISIYNEEMIVARCFIGFLIFS.

The protein belongs to the ATPase protein MI25 family. F-type ATPases have 2 components, CF(1) - the catalytic core - and CF(0) - the membrane proton channel. CF(1) has five subunits: alpha(3), beta(3), gamma(1), delta(1), epsilon(1). CF(0) has three main subunits: a, b and c.

The protein resides in the mitochondrion membrane. This is one of the chains of the nonenzymatic component (CF(0) subunit) of the mitochondrial ATPase complex. This Triticum timopheevii (Timopheev's wheat) protein is ATP synthase protein MI25.